Here is a 440-residue protein sequence, read N- to C-terminus: Transposon Ty1-ER2 Gag polyprotein (440 aa).

3 stretches are compositionally biased toward polar residues: residues 1–10, 48–60, and 127–152; these read MESQQLSNYP, TKANSQQTTTPAS, and QSQFPQYPSSVGTPLSTPSPESGNTF. Disordered stretches follow at residues 1–93, 126–173, and 352–440; these read MESQ…MMTQ, PQSQ…RPPP, and GSRN…PETY. Residues 153–165 show a composition bias toward low complexity; sequence TDSSSADSDMTST. The segment at 299-401 is RNA-binding; that stretch reads NNGIHINNKV…NSKSKTARAH (103 aa). A compositionally biased stretch (low complexity) spans 402-418; sequence NVSTSNNSPSTDNDSIS. Serine 416 carries the post-translational modification Phosphoserine. The span at 419–428 shows a compositional bias: polar residues; sequence KSTTEPIQLN. Residues 429 to 440 show a composition bias toward basic and acidic residues; that stretch reads NKHDLHLRPETY.

Homotrimer.

It is found in the cytoplasm. Its function is as follows. Capsid protein (CA) is the structural component of the virus-like particle (VLP), forming the shell that encapsulates the retrotransposons dimeric RNA genome. The particles are assembled from trimer-clustered units and there are holes in the capsid shells that allow for the diffusion of macromolecules. CA also has nucleocapsid-like chaperone activity, promoting primer tRNA(i)-Met annealing to the multipartite primer-binding site (PBS), dimerization of Ty1 RNA and initiation of reverse transcription. This is Transposon Ty1-ER2 Gag polyprotein (TY1A-ER2) from Saccharomyces cerevisiae (strain ATCC 204508 / S288c) (Baker's yeast).